Consider the following 175-residue polypeptide: MASLNDSHFDLFDLPAQFALDASALDHAYRTVQAQVHPDRFAAAGDAQKRIAMQWATRTNEAYQTLRDPLKRATYLLHLRGIDVGAENNTAMEPAFLMQQMEWRESIEDAAAAKNVDALDALLTELRDEERMRFDKLGALLDSGANQAAGEAVRQLMFIERVASEIGTQIERLEN.

The 73-residue stretch at 7–79 (SHFDLFDLPA…LKRATYLLHL (73 aa)) folds into the J domain.

The protein belongs to the HscB family. In terms of assembly, interacts with HscA and stimulates its ATPase activity.

In terms of biological role, co-chaperone involved in the maturation of iron-sulfur cluster-containing proteins. Seems to help targeting proteins to be folded toward HscA. The polypeptide is Co-chaperone protein HscB homolog (Paraburkholderia xenovorans (strain LB400)).